The following is a 426-amino-acid chain: Tol-Pal system protein TolB (426 aa).

Positions 1 to 24 (MKLKSRFTSIIGVITLFFSQTVTA) are cleaved as a signal peptide.

Belongs to the TolB family. As to quaternary structure, the Tol-Pal system is composed of five core proteins: the inner membrane proteins TolA, TolQ and TolR, the periplasmic protein TolB and the outer membrane protein Pal. They form a network linking the inner and outer membranes and the peptidoglycan layer.

Its subcellular location is the periplasm. In terms of biological role, part of the Tol-Pal system, which plays a role in outer membrane invagination during cell division and is important for maintaining outer membrane integrity. The polypeptide is Tol-Pal system protein TolB (Actinobacillus pleuropneumoniae serotype 3 (strain JL03)).